The primary structure comprises 372 residues: Ciliary neurotrophic factor receptor subunit alpha (372 aa).

Residues 1–22 (MAASVPWACCAVLAAAAAAVYT) form the signal peptide. The 78-residue stretch at 27–104 (PQEAPHVQYE…WHLRHQVLLH (78 aa)) folds into the Ig-like C2-type domain. A disulfide bond links cysteine 46 and cysteine 89. 4 N-linked (GlcNAc...) asparagine glycosylation sites follow: asparagine 60, asparagine 70, asparagine 142, and asparagine 190. 2 consecutive Fibronectin type-III domains span residues 108–205 (PPRE…VKPD) and 206–306 (PPEN…TEEP). Positions 290–294 (WSDWS) match the WSXWS motif motif. The interval 301 to 338 (PWTEEPRHLTTEAQAPETTTSTTSSLAPPPTTKICDPG) is disordered. Residues 311–326 (TEAQAPETTTSTTSSL) are compositionally biased toward low complexity. Serine 342 carries the GPI-anchor amidated serine lipid modification. Residues 343–372 (GGGPSILFLTSVPVTLVLAAAAATANNLLI) constitute a propeptide, removed in mature form.

The protein belongs to the type I cytokine receptor family. Type 3 subfamily. Forms a heterotrimer with LIFR and IL6ST. Interacts with heterodimeric neurotropic cytokine composed of CLCF1/CLC and CRLF1/CLF-1. Either alone or in complex with the heterodimer CLCF1-CRLF1 interacts with SORL1; this interaction may promote internalization and lysosomal degradation.

The protein resides in the cell membrane. Its function is as follows. Binds to CNTF. The alpha subunit provides the receptor specificity. The polypeptide is Ciliary neurotrophic factor receptor subunit alpha (Cntfr) (Mus musculus (Mouse)).